The primary structure comprises 138 residues: ATP synthase epsilon chain (138 aa).

The protein belongs to the ATPase epsilon chain family. As to quaternary structure, F-type ATPases have 2 components, CF(1) - the catalytic core - and CF(0) - the membrane proton channel. CF(1) has five subunits: alpha(3), beta(3), gamma(1), delta(1), epsilon(1). CF(0) has three main subunits: a, b and c.

It is found in the cell inner membrane. In terms of biological role, produces ATP from ADP in the presence of a proton gradient across the membrane. This is ATP synthase epsilon chain from Endomicrobium trichonymphae.